A 376-amino-acid chain; its full sequence is Carbamoyl phosphate synthase small chain (376 aa).

The tract at residues 1–183 is CPSase; it reads MENILLNKAL…IYKKKYIEKN (183 aa). Residues Ser51, Gly235, and Gly237 each contribute to the L-glutamine site. The region spanning 187–374 is the Glutamine amidotransferase type-1 domain; that stretch reads NIVAYDFGIK…INLVKDYRLN (188 aa). Cys263 (nucleophile) is an active-site residue. L-glutamine is bound by residues Leu264, Gln267, Asn305, and Phe308. Catalysis depends on residues His347 and Glu349.

Belongs to the CarA family. In terms of assembly, composed of two chains; the small (or glutamine) chain promotes the hydrolysis of glutamine to ammonia, which is used by the large (or ammonia) chain to synthesize carbamoyl phosphate. Tetramer of heterodimers (alpha,beta)4.

The catalysed reaction is hydrogencarbonate + L-glutamine + 2 ATP + H2O = carbamoyl phosphate + L-glutamate + 2 ADP + phosphate + 2 H(+). It catalyses the reaction L-glutamine + H2O = L-glutamate + NH4(+). It functions in the pathway amino-acid biosynthesis; L-arginine biosynthesis; carbamoyl phosphate from bicarbonate: step 1/1. The protein operates within pyrimidine metabolism; UMP biosynthesis via de novo pathway; (S)-dihydroorotate from bicarbonate: step 1/3. Its function is as follows. Small subunit of the glutamine-dependent carbamoyl phosphate synthetase (CPSase). CPSase catalyzes the formation of carbamoyl phosphate from the ammonia moiety of glutamine, carbonate, and phosphate donated by ATP, constituting the first step of 2 biosynthetic pathways, one leading to arginine and/or urea and the other to pyrimidine nucleotides. The small subunit (glutamine amidotransferase) binds and cleaves glutamine to supply the large subunit with the substrate ammonia. This chain is Carbamoyl phosphate synthase small chain, found in Wigglesworthia glossinidia brevipalpis.